An 892-amino-acid chain; its full sequence is Smad protein daf-3 (892 aa).

Disordered regions lie at residues 1–43 and 135–161; these read MGDH…GLED and PYLDPDSQDDDPEDGVNYPDPDLFDTK. Polar residues predominate over residues 15–26; the sequence is IPPQFNYSQPGT. In terms of domain architecture, MH1 spans 198–347; sequence KIVEYLMYYR…YEIVIGTMIV (150 aa). Residues 505 to 552 are disordered; the sequence is YPDFHHPFNQQPHQPPQLSQNHTSQQGSHQPGHQGQVPNDPPISRPVL. Residues 528–540 show a composition bias toward low complexity; the sequence is SQQGSHQPGHQGQ. One can recognise an MH2 domain in the interval 657–880; sequence WGTIVYYEKN…TNCFEPLGME (224 aa).

Belongs to the dwarfin/SMAD family. In terms of assembly, interacts with R-SMADs daf-8 and daf-14. Interacts with daf-14 in a daf-8 dependent manner. May interact with daf-5.

It is found in the cytoplasm. It localises to the nucleus. Its subcellular location is the chromosome. Transcriptional regulator and common SMAD (co-SMAD), required to regulate entry into a developmentally arrested larval state known as dauer, in response to harsh environmental conditions. Probable component of transcriptional regulatory complex with SMAD protein daf-5. Acts antagonistically to SMAD signaling downstream of TGF-beta-like daf-7 signaling. Binds to the 5'-GTCTG-3' motif found in regulatory regions and may modulate the expression of genes involved in TGF-beta-like daf-7 and Notch lag-2 signaling. May regulate gene expression outside the dauer pathway. This Caenorhabditis elegans protein is Smad protein daf-3.